We begin with the raw amino-acid sequence, 639 residues long: Immunoglobulin-like domain-containing receptor 2 (639 aa).

The N-terminal stretch at 1 to 20 is a signal peptide; it reads MDRVLLRWISLFWLTAMVEG. The region spanning 21 to 162 is the Ig-like V-type domain; that stretch reads LQVTVPDKKK…LEGKNEDSVE (142 aa). Over 21–186 the chain is Lumenal; the sequence is LQVTVPDKKK…PSFAVEIMPE (166 aa). Residues cysteine 42 and cysteine 145 are joined by a disulfide bond. Residues 187 to 207 form a helical membrane-spanning segment; it reads WVFVGLVLLGVFLFFVLVGIC. Residues 208 to 639 are Cytoplasmic-facing; it reads WCQCCPHSCC…DFPTRMSLVV (432 aa). 3 disordered regions span residues 273–295, 374–415, and 437–639; these read LMDKPHPPPLAPSDSTGGSHSVR, WSGV…MLSR, and YGQR…SLVV. 2 stretches are compositionally biased toward basic and acidic residues: residues 393 to 414 and 442 to 464; these read YNKEDRESFRHSQPRSKSEMLS and RRADGNSHEARGGSRFERSESRA. Serine 473 bears the Phosphoserine mark. Basic and acidic residues predominate over residues 483 to 493; sequence RSREPLTDADR. Arginine 544 is subject to Omega-N-methylarginine. Serine 579 carries the phosphoserine modification. Positions 606–617 are enriched in basic and acidic residues; sequence RGRDLPYHSNSE.

Belongs to the immunoglobulin superfamily. LISCH7 family. Interacts with MARVELD2 and OCLN. Interacts with P4HB AND HSPA5; the interaction with HSPA5 stabilizes ILDR2 expression. Interacts (via C-terminus) with TRA2A, TRA2B and SRSF1. Expressed in testis, brain, pituitary, colon, heart, nerves, prostate, esophagus, lung liver and small intestine. Highly expressed in macrophages, also expressed in monocytes and at low levels in NK and NKT cells (at protein level).

It localises to the endoplasmic reticulum membrane. The protein localises to the cell junction. The protein resides in the tight junction. It is found in the nucleus. Its function is as follows. May be involved in ER stress pathways with effects on lipid homeostasis and insulin secretion. With ILDR1 and LSR, involved in the maintain of the epithelial barrier function through the recruitment of MARVELD2/tricellulin to tricellular tight junctions. Also functions as a B7-like protein family member expressed on immune cells and inflamed tissue and with T-cell inhibitory activity. In the inner ear, may regulate alternative pre-mRNA splicing via binding to TRA2A, TRA2B and SRSF1. The protein is Immunoglobulin-like domain-containing receptor 2 of Homo sapiens (Human).